Reading from the N-terminus, the 643-residue chain is Aspartic protease 3 (643 aa).

The signal sequence occupies residues 1 to 31 (MEGRTTAGRATPAGFWLFSCCLASVLWSANA). A compositionally biased stretch (low complexity) spans 87–99 (APEVSGAAGASAS). Residues 87 to 116 (APEVSGAAGASASKTSEKPIRPYHTGPSSR) form a disordered region. The 320-residue stretch at 281 to 600 (YVGVIGIGTP…GTRPSLVGIA (320 aa)) folds into the Peptidase A1 domain. Catalysis depends on residues D299 and D490.

It belongs to the peptidase A1 family.

Its subcellular location is the endomembrane system. Inhibited by 49c, a hydroxyethylamine scaffold-based compound. In terms of biological role, required for the processing-mediated maturation of a subset of microneme proteins, such as MIC6, and rhoptry proteins, such as ROP1. By regulating microneme and rhoptry processing, plays an essential role in the lysis of the host cell membrane during egress and in rhoptry content discharge, which is required for invasion of host cells. The polypeptide is Aspartic protease 3 (Toxoplasma gondii).